The following is a 101-amino-acid chain: Protein RADIALIS-like 2 (101 aa).

Residues Y9–E64 enclose the SANT domain. The disordered stretch occupies residues G69 to Q101.

In terms of tissue distribution, expressed in the funiculus of ovules and in embryos. In young ovules, expression is observed in the adaxial side of the funiculus (the stalk connecting the embryo sac to the placenta). Also expressed in heart-stage embryos, in the cortex and endodermis of the hypocotyl region but not in the cotyledons, shoot and root apical meristems, provasculature or epidermis. Not detected in young seedlings, mature roots or in young floral primordia.

It is found in the nucleus. Functionally, probable transcription factor. Required for female gametophyte development. The protein is Protein RADIALIS-like 2 (RL2) of Arabidopsis thaliana (Mouse-ear cress).